We begin with the raw amino-acid sequence, 226 residues long: MTFMIRDVPKDARPRERLLSSGPESLADHELLAILLRTGTKEESVLQLAHRLLKHFEGLRLLKDATIEEITSIKGIGTTKAVQILAAIELGRRISRLSYNGRYVIRSPEDGAKYVMEDMRFLSQEHFVAIYLNTKNQVIHRKTIFIGSLNASIVHPREVFKEAIKRSAASIICVHNHPSGDPTPSREDIDVTKRLAECGRIIGIELLDHLIIGDQKFVSLKEKGYV.

In terms of domain architecture, MPN spans 104–226 (VIRSPEDGAK…FVSLKEKGYV (123 aa)). Residues His175, His177, and Asp188 each coordinate Zn(2+). The JAMM motif motif lies at 175-188 (HNHPSGDPTPSRED).

This sequence belongs to the UPF0758 family.

The chain is UPF0758 protein GWCH70_2550 from Geobacillus sp. (strain WCH70).